The following is a 311-amino-acid chain: Serine/threonine-protein phosphatase 4 catalytic subunit A (311 aa).

Residues Asp-58, His-60, Asp-86, and Asn-118 each contribute to the Mn(2+) site. His-119 serves as the catalytic Proton donor. His-168 and His-242 together coordinate Mn(2+). Leu-311 carries the post-translational modification Leucine methyl ester.

It belongs to the PPP phosphatase family. PP-4 (PP-X) subfamily. Serine/threonine-protein phosphatase 4 (PP4) occurs in different assemblies of the catalytic and one or more regulatory subunits. Mn(2+) is required as a cofactor.

It localises to the cytoplasm. It is found in the cytoskeleton. The protein resides in the microtubule organizing center. The protein localises to the centrosome. It catalyses the reaction O-phospho-L-seryl-[protein] + H2O = L-seryl-[protein] + phosphate. It carries out the reaction O-phospho-L-threonyl-[protein] + H2O = L-threonyl-[protein] + phosphate. Its function is as follows. Protein phosphatase that regulates many processes such as microtubule organization at centrosomes. The polypeptide is Serine/threonine-protein phosphatase 4 catalytic subunit A (ppp4ca) (Danio rerio (Zebrafish)).